The following is a 177-amino-acid chain: Nucleoside triphosphate/diphosphate phosphatase (177 aa).

The active-site Proton donor is Arg-23. Asn-87, Asp-103, Asp-105, Asp-107, Asp-120, and Glu-123 together coordinate Mg(2+).

Belongs to the Ntdp family. Mg(2+) is required as a cofactor.

It catalyses the reaction a ribonucleoside 5'-triphosphate + H2O = a ribonucleoside 5'-diphosphate + phosphate + H(+). The catalysed reaction is a ribonucleoside 5'-diphosphate + H2O = a ribonucleoside 5'-phosphate + phosphate + H(+). Functionally, has nucleoside phosphatase activity towards nucleoside triphosphates and nucleoside diphosphates. This chain is Nucleoside triphosphate/diphosphate phosphatase, found in Streptococcus suis (strain 98HAH33).